We begin with the raw amino-acid sequence, 708 residues long: Elongation factor G (708 aa).

In terms of domain architecture, tr-type G spans 8 to 290 (KRYRNIGISA…AVIQYLPAPM (283 aa)). GTP-binding positions include 17 to 24 (AHIDAGKT), 88 to 92 (DTPGH), and 142 to 145 (NKMD).

It belongs to the TRAFAC class translation factor GTPase superfamily. Classic translation factor GTPase family. EF-G/EF-2 subfamily.

The protein localises to the cytoplasm. Catalyzes the GTP-dependent ribosomal translocation step during translation elongation. During this step, the ribosome changes from the pre-translocational (PRE) to the post-translocational (POST) state as the newly formed A-site-bound peptidyl-tRNA and P-site-bound deacylated tRNA move to the P and E sites, respectively. Catalyzes the coordinated movement of the two tRNA molecules, the mRNA and conformational changes in the ribosome. The protein is Elongation factor G of Psychrobacter cryohalolentis (strain ATCC BAA-1226 / DSM 17306 / VKM B-2378 / K5).